The chain runs to 1520 residues: DNA-directed RNA polymerase subunit beta'' (1520 aa).

Positions 220, 296, 303, and 306 each coordinate Zn(2+). Basic and acidic residues-rich tracts occupy residues 645–654 (TREEEYRTRE) and 664–674 (PENKYRTREGE). Disordered regions lie at residues 645–676 (TREE…GEGE) and 705–786 (YRTL…KKEG). 2 stretches are compositionally biased toward acidic residues: residues 730 to 748 (GEYE…SSED) and 756 to 779 (TLEE…PEED).

The protein belongs to the RNA polymerase beta' chain family. RpoC2 subfamily. In terms of assembly, in plastids the minimal PEP RNA polymerase catalytic core is composed of four subunits: alpha, beta, beta', and beta''. When a (nuclear-encoded) sigma factor is associated with the core the holoenzyme is formed, which can initiate transcription. Requires Zn(2+) as cofactor.

The protein resides in the plastid. It is found in the chloroplast. The enzyme catalyses RNA(n) + a ribonucleoside 5'-triphosphate = RNA(n+1) + diphosphate. Its function is as follows. DNA-dependent RNA polymerase catalyzes the transcription of DNA into RNA using the four ribonucleoside triphosphates as substrates. The sequence is that of DNA-directed RNA polymerase subunit beta'' from Sorghum bicolor (Sorghum).